Reading from the N-terminus, the 310-residue chain is Malate dehydrogenase (310 aa).

Residues 7–12 (GAGNVG) and Asp-32 each bind NAD(+). Substrate is bound by residues Arg-81 and Arg-87. NAD(+)-binding positions include Asn-94 and 117–119 (VSN). 2 residues coordinate substrate: Asn-119 and Arg-150. The active-site Proton acceptor is His-174.

The protein belongs to the LDH/MDH superfamily. MDH type 3 family.

It carries out the reaction (S)-malate + NAD(+) = oxaloacetate + NADH + H(+). Functionally, catalyzes the reversible oxidation of malate to oxaloacetate. The chain is Malate dehydrogenase from Chlorobium limicola (strain DSM 245 / NBRC 103803 / 6330).